Here is a 910-residue protein sequence, read N- to C-terminus: Seizure 6-like protein 2 (910 aa).

Residues 1–27 (MGTPRAQHPPPPQLLFLILLSCPWIQG) form the signal peptide. The Extracellular segment spans residues 28-844 (LPLKEEEILP…DPSRQLEGGN (817 aa)). An O-glycosylated at one site region spans residues 41–48 (SETPTVAS). Residues 65 to 152 (EMGYLPGSDR…PLGPEGGEEE (88 aa)) are disordered. The span at 123–145 (LTPPPGTTAPPPPSPASPGPPLG) shows a compositional bias: pro residues. Cys173 and Cys202 are joined by a disulfide. Residues 173 to 286 (CNNNISEGEG…GGFRIHYQAY (114 aa)) enclose the CUB 1 domain. N-linked (GlcNAc...) asparagine glycans are attached at residues Asn176, Asn222, and Asn247. Residues 288–347 (LSCGFPPRPAHGDVSVTDLHPGGTATFHCDSGYQLQGEETLICLNGTRPSWNGETPSCMA) form the Sushi 1 domain. Disulfide bonds link Cys290–Cys330, Cys316–Cys345, Cys349–Cys376, Cys464–Cys508, Cys491–Cys523, and Cys527–Cys553. 5 N-linked (GlcNAc...) asparagine glycosylation sites follow: Asn332, Asn355, Asn373, Asn473, and Asn517. Positions 349–459 (CGGTIHNATL…LLLSLRFEAF (111 aa)) constitute a CUB 2 domain. A Sushi 2 domain is found at 462–525 (DRCFAPFLAH…WNDTEPACKA (64 aa)). In terms of domain architecture, CUB 3 spans 527-638 (CGGELSEPAG…QGFVLHFKEV (112 aa)). A glycan (N-linked (GlcNAc...) asparagine) is linked at Asn641. Sushi domains are found at residues 642–701 (DTCP…ACQK), 703–766 (MTCA…KCAL), and 769–830 (EPCL…LCKV). 6 cysteine pairs are disulfide-bonded: Cys644–Cys686, Cys672–Cys699, Cys705–Cys747, Cys733–Cys764, Cys771–Cys813, and Cys799–Cys828. The helical transmembrane segment at 845–865 (LALAILLPLGLVIVLGSGVYI) threads the bilayer. Residues 866-910 (YYTKLQGKSLFGFSGSHSYSPITVESDFSNPLYEAGDTREYEVSI) lie on the Cytoplasmic side of the membrane.

It belongs to the SEZ6 family. In terms of processing, O-glycosylated with core 1 or possibly core 8 glycans.

The protein resides in the cell membrane. The protein localises to the endoplasmic reticulum membrane. Its function is as follows. May contribute to specialized endoplasmic reticulum functions in neurons. This chain is Seizure 6-like protein 2 (SEZ6L2), found in Homo sapiens (Human).